Here is a 527-residue protein sequence, read N- to C-terminus: Tetanolysin (527 aa).

Positions 1–32 are cleaved as a signal peptide; it reads MNKNVLKFVSRSLLIFSMTGLISNYNSSNVLA. The next 4 membrane-spanning stretches (beta stranded) occupy residues 215–228, 235–244, 313–322, and 330–342; these read QSQL…NFKA, IDFDSIFKGE, SSHVKAAFKA, and SSNA…LNQS. Residues 484–494 carry the Conserved undecapeptide motif; it reads ECTGLAWEWWR. Positions 516–517 match the Cholesterol binding motif; that stretch reads TL.

It belongs to the cholesterol-dependent cytolysin family. In terms of assembly, homooligomeric pore complex containing 35-50 subunits; when inserted in the host membrane. In terms of processing, purified 48 and 53 kDa proteins with 4 different pIs (6.1, 5.6, 5.3 and 6.6) in decreasing order of activity.

The protein localises to the secreted. It localises to the host cell membrane. Its activity is regulated as follows. Cytolysis of host cells is inhibited by cholesterol. Functionally, a cholesterol-dependent toxin that causes cytolysis by forming pores in cholesterol-containing host membranes. After binding to target membranes, the protein undergoes a major conformation change, leading to its insertion in the host membrane and formation of an oligomeric pore complex. Cholesterol is required for binding to host membranes, membrane insertion and pore formation; cholesterol binding is mediated by a Thr-Leu pair in the C-terminus. The sequence is that of Tetanolysin from Clostridium tetani (strain Massachusetts / E88).